A 301-amino-acid chain; its full sequence is Bifunctional protein FolD (301 aa).

NADP(+) is bound by residues 166–168 (GKS), Ser-191, and Ile-232.

Belongs to the tetrahydrofolate dehydrogenase/cyclohydrolase family. As to quaternary structure, homodimer.

The catalysed reaction is (6R)-5,10-methylene-5,6,7,8-tetrahydrofolate + NADP(+) = (6R)-5,10-methenyltetrahydrofolate + NADPH. The enzyme catalyses (6R)-5,10-methenyltetrahydrofolate + H2O = (6R)-10-formyltetrahydrofolate + H(+). The protein operates within one-carbon metabolism; tetrahydrofolate interconversion. In terms of biological role, catalyzes the oxidation of 5,10-methylenetetrahydrofolate to 5,10-methenyltetrahydrofolate and then the hydrolysis of 5,10-methenyltetrahydrofolate to 10-formyltetrahydrofolate. The sequence is that of Bifunctional protein FolD from Orientia tsutsugamushi (strain Ikeda) (Rickettsia tsutsugamushi).